The sequence spans 286 residues: tRNA (guanine-N(7)-)-methyltransferase (286 aa).

S-adenosyl-L-methionine is bound by residues Glu91, Glu116, Asn143, and Asp165. Asp165 is an active-site residue. Substrate contacts are provided by residues Lys169, Asp201, and 262-265; that span reads TNFE.

This sequence belongs to the class I-like SAM-binding methyltransferase superfamily. TrmB family.

It catalyses the reaction guanosine(46) in tRNA + S-adenosyl-L-methionine = N(7)-methylguanosine(46) in tRNA + S-adenosyl-L-homocysteine. The protein operates within tRNA modification; N(7)-methylguanine-tRNA biosynthesis. Functionally, catalyzes the formation of N(7)-methylguanine at position 46 (m7G46) in tRNA. This is tRNA (guanine-N(7)-)-methyltransferase from Bifidobacterium longum subsp. infantis (strain ATCC 15697 / DSM 20088 / JCM 1222 / NCTC 11817 / S12).